Reading from the N-terminus, the 417-residue chain is Serine--tRNA ligase (417 aa).

226–228 (TSE) contributes to the L-serine binding site. ATP contacts are provided by residues 257–259 (RRE) and Val-273. Glu-280 is a binding site for L-serine. Residue 344 to 347 (ELTS) participates in ATP binding. Thr-379 is a binding site for L-serine.

Belongs to the class-II aminoacyl-tRNA synthetase family. Type-1 seryl-tRNA synthetase subfamily. Homodimer. The tRNA molecule binds across the dimer.

The protein resides in the cytoplasm. It catalyses the reaction tRNA(Ser) + L-serine + ATP = L-seryl-tRNA(Ser) + AMP + diphosphate + H(+). The enzyme catalyses tRNA(Sec) + L-serine + ATP = L-seryl-tRNA(Sec) + AMP + diphosphate + H(+). It functions in the pathway aminoacyl-tRNA biosynthesis; selenocysteinyl-tRNA(Sec) biosynthesis; L-seryl-tRNA(Sec) from L-serine and tRNA(Sec): step 1/1. Catalyzes the attachment of serine to tRNA(Ser). Is also able to aminoacylate tRNA(Sec) with serine, to form the misacylated tRNA L-seryl-tRNA(Sec), which will be further converted into selenocysteinyl-tRNA(Sec). This Mycobacterium sp. (strain KMS) protein is Serine--tRNA ligase.